The sequence spans 265 residues: Di-trans,poly-cis-undecaprenyl-diphosphate synthase (265 aa).

Residues Arg236–Gly238 carry the RXG motif; crucial for prenyltransferase activity motif.

This sequence belongs to the UPP synthase family. It depends on Mg(2+) as a cofactor.

The catalysed reaction is 8 isopentenyl diphosphate + (2E,6E)-farnesyl diphosphate = di-trans,octa-cis-undecaprenyl diphosphate + 8 diphosphate. It functions in the pathway protein modification; protein glycosylation. It participates in lipid metabolism. In terms of biological role, cis-prenyl transferase involved in the synthesis of dolichol, a long-chain polyprenol that is utilized as a sugar carrier in protein glycosylation in the endoplasmic reticulum (ER). Catalyzes the sequential condensation of isopentenyl pyrophosphate (IPP) with farnesyl pyrophosphate (FPP) to produce a polyprenyl pyrophosphate which contains 11 (major) and 12 (minor) isoprene units. This chain is Di-trans,poly-cis-undecaprenyl-diphosphate synthase, found in Giardia intestinalis (strain ATCC 50803 / WB clone C6) (Giardia lamblia).